The chain runs to 283 residues: Poly(3-hydroxyalkanoate) depolymerase (283 aa).

Residues 30 to 253 (PLLIFNGIGA…IDDGHLFLIT (224 aa)) form the AB hydrolase-1 domain. S102 functions as the Charge relay system in the catalytic mechanism.

Belongs to the AB hydrolase superfamily. Lipase family.

Functionally, complements a mutant that does not degrade PHA; might be a lipase. The protein is Poly(3-hydroxyalkanoate) depolymerase of Ectopseudomonas oleovorans (Pseudomonas oleovorans).